Here is a 269-residue protein sequence, read N- to C-terminus: Aminoglycoside N(3)-acetyltransferase III (269 aa).

Belongs to the antibiotic N-acetyltransferase family.

It catalyses the reaction a 2-deoxystreptamine antibiotic + acetyl-CoA = an N(3)-acetyl-2-deoxystreptamine antibiotic + CoA + H(+). Resistance to antibiotics containing the 2-deoxy-streptamine ring including gentamicin, kanamycin, tobramycin, neomycin and apramycin. This is Aminoglycoside N(3)-acetyltransferase III (aac3-Vb) from Serratia marcescens.